The chain runs to 1185 residues: Calmodulin-binding transcription activator homolog 1 (1185 aa).

The CG-1 DNA-binding region spans 72 to 200 (AVELFPCFKD…YLNVKTNNKI (129 aa)). Disordered regions lie at residues 252-277 (GVNL…RRNS) and 390-411 (KIRS…VTST). Residues 393 to 411 (SGSQESPMGPPSSSSVTST) show a composition bias toward low complexity. The 81-residue stretch at 418–498 (EMTPSSSSLK…ISTASEFTYE (81 aa)) folds into the IPT/TIG domain. One copy of the ANK repeat lies at 616–646 (DGSTPLHTACKNSASRIARLIISIDSSAIDV). The IQ domain occupies 957–984 (EAAMVIQRAYRVYRARSTTRRQEDIERR). Residues 1121 to 1185 (CPQTSGDQRN…KPPYGCGTLA (65 aa)) form a disordered region. Residues 1128 to 1147 (QRNKRDSDGERKRDAHHDAP) show a composition bias toward basic and acidic residues.

The protein belongs to the CAMTA family. In terms of assembly, may interact with calmodulin. In terms of tissue distribution, expressed broadly in the nervous system.

The protein resides in the nucleus. In terms of biological role, transcription factor. Positively modulates neuronal levels of the ubiquitous Ca2+ sensor calmodulin/cmd-1, probably by direct binding to the cmd-1 promoter, thereby regulating Ca2+ signaling, physiology, and behavior. The polypeptide is Calmodulin-binding transcription activator homolog 1 (Caenorhabditis elegans).